The sequence spans 366 residues: Glycerol-3-phosphate dehydrogenase [NAD(+)], glycosomal (366 aa).

NAD(+) contacts are provided by residues 22–27, Phe97, Lys125, and Ala157; that span reads GSGAFG. Lys125 lines the substrate pocket. The active-site Proton acceptor is Lys210. Residues Arg274, Val298, and Glu300 each contribute to the NAD(+) site. Substrate is bound at residue 274–275; the sequence is RN. The short motif at 364-366 is the Microbody targeting signal element; it reads SKL.

This sequence belongs to the NAD-dependent glycerol-3-phosphate dehydrogenase family. Homodimer.

The protein resides in the glycosome. It carries out the reaction sn-glycerol 3-phosphate + NAD(+) = dihydroxyacetone phosphate + NADH + H(+). In Leishmania mexicana, this protein is Glycerol-3-phosphate dehydrogenase [NAD(+)], glycosomal (GPD).